Here is a 497-residue protein sequence, read N- to C-terminus: Glycerol kinase (497 aa).

Residue T12 participates in ADP binding. T12, T13, and S14 together coordinate ATP. Sn-glycerol 3-phosphate is bound at residue T12. R16 lines the ADP pocket. Sn-glycerol 3-phosphate contacts are provided by R82, E83, Y134, and D243. Positions 82, 83, 134, 243, and 244 each coordinate glycerol. 2 residues coordinate ADP: T265 and G308. ATP contacts are provided by T265, G308, Q312, and G409. Residues G409 and N413 each contribute to the ADP site.

It belongs to the FGGY kinase family.

It catalyses the reaction glycerol + ATP = sn-glycerol 3-phosphate + ADP + H(+). It participates in polyol metabolism; glycerol degradation via glycerol kinase pathway; sn-glycerol 3-phosphate from glycerol: step 1/1. Inhibited by fructose 1,6-bisphosphate (FBP). Its function is as follows. Key enzyme in the regulation of glycerol uptake and metabolism. Catalyzes the phosphorylation of glycerol to yield sn-glycerol 3-phosphate. The protein is Glycerol kinase of Nitratidesulfovibrio vulgaris (strain ATCC 29579 / DSM 644 / CCUG 34227 / NCIMB 8303 / VKM B-1760 / Hildenborough) (Desulfovibrio vulgaris).